The sequence spans 820 residues: Leucine--tRNA ligase (820 aa).

A 'HIGH' region motif is present at residues 40–51; sequence PYPSGAGLHVGH. Positions 601–605 match the 'KMSKS' region motif; sequence KMSKS. ATP is bound at residue lysine 604.

Belongs to the class-I aminoacyl-tRNA synthetase family.

Its subcellular location is the cytoplasm. The catalysed reaction is tRNA(Leu) + L-leucine + ATP = L-leucyl-tRNA(Leu) + AMP + diphosphate. This chain is Leucine--tRNA ligase, found in Chlamydia felis (strain Fe/C-56) (Chlamydophila felis).